Here is a 358-residue protein sequence, read N- to C-terminus: MFVDNVDIYVSSGKGGAGAVSFRREKYVIQGGPDGGDGGKGGDLYFEVNANTDTLSKFKGAKHYRAKNGQPGMGRRMSGKSGEEMVIVVPPGTQVFDYESNELLLDLKEEGMRVKFLEGGKGGLGNYHFKNSVNQRPTYAQPGIAGEERHVRLELKLIADVGLVGFPNVGKSTLISTLSNARPEVANYEFTTLIPALGVVDVDEFSSFVMADIPGIIGGASEGKGLGLEFLRHIERTKTLLFVIDLSNYREPLEQFEILQKELSQFSPELSLRPFGIALSKVDALSKEEANEKIELFLKGIGLSSCQSNQYALSEALQNYIAPLESSIPAFVVPISSATHENIKPLKYLLHESVRRRG.

The 158-residue stretch at 1–158 (MFVDNVDIYV…RHVRLELKLI (158 aa)) folds into the Obg domain. In terms of domain architecture, OBG-type G spans 159–355 (ADVGLVGFPN…LKYLLHESVR (197 aa)). Residues 165–172 (GFPNVGKS), 190–194 (FTTLI), 212–215 (DIPG), 280–283 (SKVD), and 336–338 (SSA) contribute to the GTP site. Residues S172 and T192 each coordinate Mg(2+).

It belongs to the TRAFAC class OBG-HflX-like GTPase superfamily. OBG GTPase family. As to quaternary structure, monomer. The cofactor is Mg(2+).

It is found in the cytoplasm. Functionally, an essential GTPase which binds GTP, GDP and possibly (p)ppGpp with moderate affinity, with high nucleotide exchange rates and a fairly low GTP hydrolysis rate. Plays a role in control of the cell cycle, stress response, ribosome biogenesis and in those bacteria that undergo differentiation, in morphogenesis control. In Wolinella succinogenes (strain ATCC 29543 / DSM 1740 / CCUG 13145 / JCM 31913 / LMG 7466 / NCTC 11488 / FDC 602W) (Vibrio succinogenes), this protein is GTPase Obg.